Here is a 616-residue protein sequence, read N- to C-terminus: MRPPRRSAPILVCAISMATALSNATVHRDAGTVESTPPPDDEDNYTAKYYDDSIYFNIYDGTNPTPRRRTLPEIISKFSTSEMSRLGGLKAFVPVDYTPTTTLEDIEDLLNYAICDDNSCGCLIETEARIMFGDIIICVPLSAESRGVRNLKSRIMPMGLSQILSSGLGLHFSLLYGAFGSNYNSLAYMERLKPLTAMTAIAFCPMTSKLELRQNYRLEKARCELIVNIELLKIQNHGGQTIKTLTSFAIVRKDSDGQDWETCTRFASVSIEDILRSKPAANGTCCPPRDVHHDRPTLQSSNSWTRTEYFEPWQDVVDAYVPINDNHCPNDSYVVFQTLQGHEWCSRLNKNDTKNYLSSVLAFKNALYETEELMETIGMRLASQILSLVGQRGTSIRNIDPAIVSALWHSLPEKLTTTNIKYDIASPTHMSPALCTIFIQTGTSKQRFRNAGLLMVNNIFTVQARYSKQNMFEKKIYGYEHLGQALCEDGEILFQNAGQKFCRPFTDNRTIVYTMQDQVQRPWSVTWMDFNLVISDYGRAVIENLTESAMSAHKNGPRYLQMETFISDLFRYECHRDNRYVLEKKLQMFYPTTHMNELLFYPSDPTLPSPYGNGHY.

The signal sequence occupies residues 1–24 (MRPPRRSAPILVCAISMATALSNA). 5 N-linked (GlcNAc...) asparagine; by host glycosylation sites follow: N23, N44, N282, N330, and N351.

As to quaternary structure, interacts with isoform gQ2. The heterodimer gQ1-gQ2 associates with the glycoprotein complex gH-gL to form a tetrameric complex. The gH/gL/gQ1/gQ2 complex binds to host TNFRSF4. In terms of processing, glycosylated by host.

It is found in the virion. The protein resides in the host endoplasmic reticulum lumen. Functionally, plays a role in virus entry by participating in host receptor binding at the cell surface. This Homo sapiens (Human) protein is Glycoprotein Q1.